Here is a 463-residue protein sequence, read N- to C-terminus: Mitochondrial dynamics protein MID51 (463 aa).

Over 1 to 23 (MAGAGERKGKKDDNGIGTAIDFV) the chain is Mitochondrial intermembrane. Residues 24–46 (LSNARLVLGVGGAAMLGIATLAV) traverse the membrane as a helical segment. Residues 47-463 (KRMYDRAISA…LSEPEVLLQT (417 aa)) lie on the Cytoplasmic side of the membrane. A dimerization region spans residues 49–195 (MYDRAISAPT…LSGSLYDDLQ (147 aa)). Phosphoserine is present on residues S55, S59, S79, and S94. The interval 57 to 77 (PTSPTRLSHSGKRSWEEPNWM) is disordered. Residues 160-169 (AAVDICAELR) are important for interaction with DNM1L. ADP-binding residues include S187, S189, and H201. An important for interaction with DNM1L region spans residues 234-243 (RRENPEYFPR). S340, R342, and K368 together coordinate ADP.

The protein belongs to the MID49/MID51 family. As to quaternary structure, homodimer. Interacts with DNM1L.

It localises to the mitochondrion outer membrane. Mitochondrial outer membrane protein which regulates mitochondrial fission/fusion dynamics. Promotes the recruitment and association of the fission mediator dynamin-related protein 1 (DNM1L) to the mitochondrial surface independently of the mitochondrial fission FIS1 and MFF proteins. Regulates DNM1L GTPase activity and DNM1L oligomerization. Binds ADP and can also bind GDP, although with lower affinity. Does not bind CDP, UDP, ATP, AMP or GTP. Inhibits DNM1L GTPase activity in the absence of bound ADP. Requires ADP to stimulate DNM1L GTPase activity and the assembly of DNM1L into long, oligomeric tubules with a spiral pattern, as opposed to the ring-like DNM1L oligomers observed in the absence of bound ADP. Does not require ADP for its function in recruiting DNM1L. The protein is Mitochondrial dynamics protein MID51 (Mief1) of Mus musculus (Mouse).